An 89-amino-acid polypeptide reads, in one-letter code: Small ribosomal subunit protein uS17 (89 aa).

The protein belongs to the universal ribosomal protein uS17 family. As to quaternary structure, part of the 30S ribosomal subunit.

Functionally, one of the primary rRNA binding proteins, it binds specifically to the 5'-end of 16S ribosomal RNA. This chain is Small ribosomal subunit protein uS17, found in Xanthomonas axonopodis pv. citri (strain 306).